The sequence spans 859 residues: Heat shock protein 105 kDa (859 aa).

S2 is modified (N-acetylserine). The residue at position 471 (K471) is an N6-acetyllysine. 2 positions are modified to phosphoserine: S509 and S510. Disordered stretches follow at residues 515–585 and 797–859; these read MDCQ…PPEA and CEPV…MDLD. Residues 533–555 show a composition bias toward polar residues; that stretch reads QQDNNEAGTQPQVQTDGHQTSQS. At S558 the chain carries Phosphoserine. T562 carries the phosphothreonine modification. 2 stretches are compositionally biased toward basic and acidic residues: residues 564-585 and 806-815; these read EENK…PPEA and PKIESPKLER. Phosphoserine is present on S810. A Phosphothreonine modification is found at T816. A compositionally biased stretch (basic and acidic residues) spans 822-831; it reads TDKKEEDLDG. A compositionally biased stretch (polar residues) spans 850-859; it reads EKSSINMDLD.

This sequence belongs to the heat shock protein 70 family. As to quaternary structure, interacts with HSPA8/HSC70. Interacts with HSPA1A (via NBD) and HSPA1B (via NBD). Post-translationally, phosphorylation on Ser-509 may be important for regulation of the HSPA8/HSC70 chaperone activity.

It localises to the cytoplasm. Acts as a nucleotide-exchange factor (NEF) for chaperone proteins HSPA1A and HSPA1B, promoting the release of ADP from HSPA1A/B thereby triggering substrate release. Prevents the aggregation of denatured proteins in cells under severe stress, on which the ATP levels decrease markedly. Inhibits HSPA8/HSC70 ATPase and chaperone activities. The protein is Heat shock protein 105 kDa (HSPH1) of Bos taurus (Bovine).